Consider the following 469-residue polypeptide: 3-isopropylmalate dehydratase large subunit (469 aa).

Residues Cys-347, Cys-410, and Cys-413 each coordinate [4Fe-4S] cluster.

This sequence belongs to the aconitase/IPM isomerase family. LeuC type 1 subfamily. Heterodimer of LeuC and LeuD. Requires [4Fe-4S] cluster as cofactor.

It catalyses the reaction (2R,3S)-3-isopropylmalate = (2S)-2-isopropylmalate. Its pathway is amino-acid biosynthesis; L-leucine biosynthesis; L-leucine from 3-methyl-2-oxobutanoate: step 2/4. Catalyzes the isomerization between 2-isopropylmalate and 3-isopropylmalate, via the formation of 2-isopropylmaleate. In Burkholderia ambifaria (strain MC40-6), this protein is 3-isopropylmalate dehydratase large subunit.